Here is a 172-residue protein sequence, read N- to C-terminus: Trypsin inhibitor 1A (172 aa).

2 cysteine pairs are disulfide-bonded: Cys-40–Cys-84 and Cys-133–Cys-139.

This sequence belongs to the protease inhibitor I3 (leguminous Kunitz-type inhibitor) family.

Its function is as follows. WTI-1B inhibits trypsin stoichiometrically. This Psophocarpus tetragonolobus (Winged bean) protein is Trypsin inhibitor 1A.